The sequence spans 227 residues: Uracil-DNA glycosylase (227 aa).

Residue D68 is the Proton acceptor of the active site.

The protein belongs to the uracil-DNA glycosylase (UDG) superfamily. UNG family.

The protein resides in the cytoplasm. It catalyses the reaction Hydrolyzes single-stranded DNA or mismatched double-stranded DNA and polynucleotides, releasing free uracil.. In terms of biological role, excises uracil residues from the DNA which can arise as a result of misincorporation of dUMP residues by DNA polymerase or due to deamination of cytosine. The chain is Uracil-DNA glycosylase from Mycobacterium sp. (strain JLS).